The primary structure comprises 403 residues: Phosphoglycerate kinase (403 aa).

Substrate contacts are provided by residues 21–23 (DFN), Arg-36, 59–62 (HLGR), Arg-119, and Arg-159. ATP-binding positions include Lys-214, Gly-301, Glu-332, and 359–362 (GGDS).

It belongs to the phosphoglycerate kinase family. In terms of assembly, monomer.

It localises to the cytoplasm. It catalyses the reaction (2R)-3-phosphoglycerate + ATP = (2R)-3-phospho-glyceroyl phosphate + ADP. It functions in the pathway carbohydrate degradation; glycolysis; pyruvate from D-glyceraldehyde 3-phosphate: step 2/5. The chain is Phosphoglycerate kinase from Lactobacillus gasseri (strain ATCC 33323 / DSM 20243 / BCRC 14619 / CIP 102991 / JCM 1131 / KCTC 3163 / NCIMB 11718 / NCTC 13722 / AM63).